Reading from the N-terminus, the 359-residue chain is Epoxide hydrolase 4 (359 aa).

The chain crosses the membrane as a helical; Signal-anchor for type II membrane protein span at residues 15-35 (ALLYWSLVYGYCGLCASVHLL). Residues 92–337 (PLMLLLHGFP…ILSEGSHWLQ (246 aa)) form the AB hydrolase-1 domain. The active-site Nucleophile is Asp167. Tyr279 (proton donor) is an active-site residue. The active-site Proton acceptor is the His334.

Belongs to the AB hydrolase superfamily. Epoxide hydrolase family.

The protein localises to the membrane. The polypeptide is Epoxide hydrolase 4 (Ephx4) (Mus musculus (Mouse)).